The chain runs to 894 residues: MIFWSFVAGVVTFYCSLGPDSLLPNIFFTIKYKPKQLGLQELFPQGHSCAVCGKVKCKRHRPSLLLENYQPWLDLKISSKVDASLSEVLELVLENFVYPWYRDVTDDESFVDELRITLRFFASVLIRRIHKVDIPSIITKKLLKAAMKHIEVIVKARQKVKNTEFLQQAALEEYGPELHVALRSRRDELHYLRKLTELLFPYILPPKATDCRSLTLLIREILSGSVFLPSLDFLADPDTVNHLLIIFIDDSPPEKATEPASPLVPFLQKFAEPRNKKPSVLKLELKQIREQQDLLFRFMNFLKQEGAVHVLQFCLTVEEFNDRILRPELSNDEMLSLHEELQKIYKTYCLDESIDKIRFDPFIVEEIQRIAEGPYIDVVKLQTMRCLFEAYEHVLSLLENVFTPMFCHSDEYFRQLLRGAESPTRNSKLNRGSLSLDDFRNTQKRGESFGISRIGSKIKGVFKSTTMEGAMLPNYGVAEGEDDFIEEGIVVMEDDSPVEAVSTPNTPRNLAAWKISIPYVDFFEDPSSERKEKKERIPVFCIDVERNDRRAVGHEPEHWSVYRRYLEFYVLESKLTEFHGTFPDAQLPSKRIIGPKNYEFLKSKREEFQEYLQKLLQHPELSNSQLLADFLSPNGGETQFLDKILPDVNLGKIIKSVPGKLMKEKGQHLEPFIMNFINSCESPKPKPSRPELTILSPTSENNKKLFNDLFKNNANRAENTERKQNQNYFMEVMTVEGVYDYLMYVGRVVFQVPDWLHHLLMGTRILFKNTLEMYTDYYLQCKLEQLFQEHRLVSLITLLRDAIFCENTEPRSLQDKQKGAKQTFEEMMNYIPDLLVKCIGEETKYESIRLLFDGLQQPVLNKQLTYVLLDIVIQELFPELNKVQKEVTSVTSWM.

Residues Ser78 to Pro252 enclose the PXA domain. Residues Glu284–Leu416 form the RGS domain. Ser496 is modified (phosphoserine). The PX domain occupies Pro518–Thr638.

It belongs to the sorting nexin family.

The protein resides in the cytoplasm. It is found in the cell projection. Its subcellular location is the dendrite. In terms of biological role, plays a role in maintaining normal neuronal excitability and synaptic transmission. May be involved in several stages of intracellular trafficking. The protein is Sorting nexin-14 (SNX14) of Pongo abelii (Sumatran orangutan).